Reading from the N-terminus, the 392-residue chain is Nucleosome assembly protein 1-like 1-A (392 aa).

The interval 1–37 (MANIDNKGQTELDQQDMEDVEDVEEEETGEDANSKAR) is disordered. A compositionally biased stretch (acidic residues) spans 13–30 (DQQDMEDVEDVEEEETGE). Positions 126–150 (YEPTEEECEWKVEEEDISGDLKEKA) match the NAP1L motif motif. Residues 273–279 (IKKKQKH) carry the Nuclear localization signal motif. Acidic residues predominate over residues 346–377 (AIEDDDDDYDEEGEEADDEEGEEEADEDNDPD). The disordered stretch occupies residues 346–392 (AIEDDDDDYDEEGEEADDEEGEEEADEDNDPDYEPKKGQNPAECKQQ).

Belongs to the nucleosome assembly protein (NAP) family. As to quaternary structure, forms homomultimers. Interacts with histone B4. Interacts with the B-type cyclins ccnb1 and ccnb2. Post-translationally, phosphorylated by cyclin B-cdc2 kinase complexes. In terms of tissue distribution, initially expressed throughout the embryo with expression higher at the animal pole. Becomes localized to presumptive ectoderm by gastrula stages. By stage 18 (neurula), expressed in the neural plate and posterior to the cement gland. In late neurula/early tailbud stages, expressed in the neural crest, neural tube, eyes, tailbud and ventral blood islands. Adult expression is predominantly in ovaries.

Its subcellular location is the cytoplasm. The protein resides in the nucleus. In terms of biological role, acts as a chaperone for the linker histone to facilitate deposition of histone B4 onto linker DNA. Required for both remodeling of sperm chromatin into nucleosomes, and linker histone binding to nucleosome core dimers. Plays a role in tissue-specific gene regulation. Required for primitive hemopoiesis, acting upstream of tal1/scl. The sequence is that of Nucleosome assembly protein 1-like 1-A (nap1l1-a) from Xenopus laevis (African clawed frog).